A 151-amino-acid chain; its full sequence is Large ribosomal subunit protein uL13 (151 aa).

Residues 126–151 (YPGPNHPHQAQKPEELTLNTIPNGDK) are disordered. A compositionally biased stretch (polar residues) spans 142-151 (TLNTIPNGDK).

It belongs to the universal ribosomal protein uL13 family. As to quaternary structure, part of the 50S ribosomal subunit.

In terms of biological role, this protein is one of the early assembly proteins of the 50S ribosomal subunit, although it is not seen to bind rRNA by itself. It is important during the early stages of 50S assembly. The sequence is that of Large ribosomal subunit protein uL13 from Crocosphaera subtropica (strain ATCC 51142 / BH68) (Cyanothece sp. (strain ATCC 51142)).